The chain runs to 479 residues: Cysteine--tRNA ligase (479 aa).

Residue C29 coordinates Zn(2+). Residues 31 to 41 (ATVQGAPHIGH) carry the 'HIGH' region motif. Positions 171–197 (QRVEDMQDAPDADPRGKRDPRDFALWK) are disordered. Positions 182–197 (ADPRGKRDPRDFALWK) are enriched in basic and acidic residues. C224, H249, and E253 together coordinate Zn(2+). The 'KMSKS' region signature appears at 280-284 (KMSKS). K283 serves as a coordination point for ATP.

It belongs to the class-I aminoacyl-tRNA synthetase family. As to quaternary structure, monomer. The cofactor is Zn(2+).

It is found in the cytoplasm. The catalysed reaction is tRNA(Cys) + L-cysteine + ATP = L-cysteinyl-tRNA(Cys) + AMP + diphosphate. This chain is Cysteine--tRNA ligase, found in Kocuria rhizophila (strain ATCC 9341 / DSM 348 / NBRC 103217 / DC2201).